A 416-amino-acid polypeptide reads, in one-letter code: CinA-like protein (416 aa).

The protein belongs to the CinA family.

The chain is CinA-like protein from Trichormus variabilis (strain ATCC 29413 / PCC 7937) (Anabaena variabilis).